A 147-amino-acid chain; its full sequence is Augurin (147 aa).

A signal peptide spans 1–31 (MANSSARPAFLVMTALALLLLLCVGPGGISG). 2 consecutive propeptides follow at residues 32–68 (NKLK…LRRP) and 132–147 (SAHS…YDDY).

The protein belongs to the augurin family.

The protein localises to the secreted. The protein resides in the cytoplasm. It localises to the apical cell membrane. In terms of biological role, probable hormone that may attenuate cell proliferation and induce senescence of oligodendrocyte and neural precursor cells in the central nervous system. ECRG4-induced senescence is characterized by G1 arrest, RB1 dephosphorylation and accelerated CCND1 and CCND3 proteasomal degradation. This is Augurin from Bos taurus (Bovine).